We begin with the raw amino-acid sequence, 878 residues long: DNA mismatch repair protein MutS (878 aa).

ATP is bound at residue 630-637; it reads GPNMAGKS.

It belongs to the DNA mismatch repair MutS family.

Its function is as follows. This protein is involved in the repair of mismatches in DNA. It is possible that it carries out the mismatch recognition step. This protein has a weak ATPase activity. The sequence is that of DNA mismatch repair protein MutS from Chlorobaculum tepidum (strain ATCC 49652 / DSM 12025 / NBRC 103806 / TLS) (Chlorobium tepidum).